Reading from the N-terminus, the 307-residue chain is UDP-N-acetylenolpyruvoylglucosamine reductase (307 aa).

In terms of domain architecture, FAD-binding PCMH-type spans 27 to 193 (RVGGPADVVF…LDAVFEGLAD (167 aa)). Residue R172 is part of the active site. S222 serves as the catalytic Proton donor. E299 is a catalytic residue.

Belongs to the MurB family. It depends on FAD as a cofactor.

The protein resides in the cytoplasm. It carries out the reaction UDP-N-acetyl-alpha-D-muramate + NADP(+) = UDP-N-acetyl-3-O-(1-carboxyvinyl)-alpha-D-glucosamine + NADPH + H(+). It functions in the pathway cell wall biogenesis; peptidoglycan biosynthesis. Its function is as follows. Cell wall formation. The protein is UDP-N-acetylenolpyruvoylglucosamine reductase of Caulobacter sp. (strain K31).